Reading from the N-terminus, the 430-residue chain is Tyrosine--tRNA ligase (430 aa).

L-tyrosine is bound at residue Tyr-32. The 'HIGH' region motif lies at 37–46 (PTADSLHIGH). Positions 172 and 176 each coordinate L-tyrosine. Residues 232–236 (KFGKT) carry the 'KMSKS' region motif. ATP is bound at residue Lys-235. The S4 RNA-binding domain maps to 362–430 (ISLVDLLADA…KKSYYLIIVE (69 aa)).

This sequence belongs to the class-I aminoacyl-tRNA synthetase family. TyrS type 1 subfamily. Homodimer.

It is found in the cytoplasm. The enzyme catalyses tRNA(Tyr) + L-tyrosine + ATP = L-tyrosyl-tRNA(Tyr) + AMP + diphosphate + H(+). Functionally, catalyzes the attachment of tyrosine to tRNA(Tyr) in a two-step reaction: tyrosine is first activated by ATP to form Tyr-AMP and then transferred to the acceptor end of tRNA(Tyr). This is Tyrosine--tRNA ligase from Porphyromonas gingivalis (strain ATCC 33277 / DSM 20709 / CIP 103683 / JCM 12257 / NCTC 11834 / 2561).